Consider the following 329-residue polypeptide: Malate dehydrogenase (329 aa).

NAD(+) is bound at residue 12-18; that stretch reads GAAGQIG. Substrate contacts are provided by Arg93 and Arg99. NAD(+) is bound by residues Asn106, Gln113, and 130–132; that span reads VGN. Residues Asn132 and Arg163 each contribute to the substrate site. Catalysis depends on His188, which acts as the Proton acceptor.

This sequence belongs to the LDH/MDH superfamily. MDH type 2 family.

The catalysed reaction is (S)-malate + NAD(+) = oxaloacetate + NADH + H(+). With respect to regulation, strongly inhibited by Hg(2+) and Zn(2+). Activated by Na(+), NH(4)(+), Ca(2+), Cu(2+) and Mg(2+). Catalyzes the reversible oxidation of malate to oxaloacetate. Exhibits remarkably higher catalytic efficiency for oxaloacetate reduction than for malate oxidation in vitro. Highly specific for NAD(H). Can also use NADPH for oxaloacetate reduction, but catalytic efficiency is 97-fold higher with NADH. No activity detected with NADP(+) and malate. The polypeptide is Malate dehydrogenase (Streptomyces avermitilis (strain ATCC 31267 / DSM 46492 / JCM 5070 / NBRC 14893 / NCIMB 12804 / NRRL 8165 / MA-4680)).